The chain runs to 215 residues: Probable peptidyl-prolyl cis-trans isomerase (215 aa).

Residues 38-197 (DGIYAVMETN…RRGAAAKRFV (160 aa)) form the PPIase cyclophilin-type domain.

The protein belongs to the cyclophilin-type PPIase family.

It carries out the reaction [protein]-peptidylproline (omega=180) = [protein]-peptidylproline (omega=0). PPIases accelerate the folding of proteins. It catalyzes the cis-trans isomerization of proline imidic peptide bonds in oligopeptides. This Treponema pallidum (strain Nichols) protein is Probable peptidyl-prolyl cis-trans isomerase (ppiB).